Consider the following 347-residue polypeptide: 3',5'-bisphosphate nucleotidase 2 (347 aa).

D46 acts as the Proton acceptor in catalysis. Mg(2+) is bound by residues E71, D134, I136, and D137. T139 serves as the catalytic Proton acceptor. 5 residues coordinate adenosine 3',5'-bisphosphate: T139, S255, K258, R272, and D284. 4 residues coordinate AMP: S255, K258, R272, and D284. D284 serves as a coordination point for Mg(2+).

It belongs to the inositol monophosphatase superfamily. It depends on Mg(2+) as a cofactor. Very low expression in roots, leaves, stems, flowers and siliques.

It catalyses the reaction adenosine 3',5'-bisphosphate + H2O = AMP + phosphate. The enzyme catalyses 3'-phosphoadenylyl sulfate + H2O = adenosine 5'-phosphosulfate + phosphate. It carries out the reaction 1D-myo-inositol 1,4-bisphosphate + H2O = 1D-myo-inositol 4-phosphate + phosphate. It functions in the pathway signal transduction; phosphatidylinositol signaling pathway. Inhibited by Li(+) (IC(50)=10 mM), Na(+) (IC(50)=200 mM) and Ca(2+) (IC(50)=0.03 mM). Its function is as follows. Phosphatase that converts adenosine 3'-phosphate 5'-phosphosulfate (PAPS) to adenosine 5'-phosphosulfate (APS) and 3'-phosphoadenosine 5'-phosphate (3'-PAP) to AMP. May regulate the flux of sulfur in the sulfur-activation pathway by converting PAPS to APS. Prevents both the toxicity of PAP on RNA processing enzymes as well as the product inhibition by PAP of sulfate conjugation. Is also able to hydrolyze inositol 1,4-bisphosphate. The protein is 3',5'-bisphosphate nucleotidase 2 of Arabidopsis thaliana (Mouse-ear cress).